We begin with the raw amino-acid sequence, 338 residues long: Lumican (338 aa).

Residues 1–18 (MSLSAFTLFLALIGGTSG) form the signal peptide. Glutamine 19 carries the post-translational modification Pyrrolidone carboxylic acid. Residues tyrosine 20, tyrosine 21, tyrosine 23, and tyrosine 30 each carry the sulfotyrosine modification. Residues 28-66 (SIYGQSSPNCAPECNCPESYPSAMYCDELKLKSVPMVPP) enclose the LRRNT domain. 10 LRR repeats span residues 67–88 (GIKY…AFEN), 91–114 (DLQW…VFSK), 117–137 (QLKK…PLPK), 138–159 (SLED…EGLV), 160–181 (NLTF…AAFK), 185–205 (SLEY…GLPV), 206–227 (SLLT…YFKR), 230–253 (ALQY…SFNV), 255–276 (SLVE…NENL), and 277–296 (ENYY…SFCK). N-linked (GlcNAc...) (keratan sulfate) asparagine glycosylation is present at asparagine 88. The N-linked (GlcNAc...) (keratan sulfate) asparagine glycan is linked to asparagine 127. The N-linked (GlcNAc...) (keratan sulfate) asparagine glycan is linked to asparagine 160. A glycan (N-linked (GlcNAc...) (keratan sulfate) asparagine) is linked at asparagine 252. A disulfide bond links cysteine 295 and cysteine 328. Residue serine 304 is modified to Phosphoserine. The LRR 11 repeat unit spans residues 305–326 (KIKHLRLDGNRISETSLPPDMY).

Belongs to the small leucine-rich proteoglycan (SLRP) family. SLRP class II subfamily. Binds to laminin. In terms of processing, sulfated on tyrosine residue(s). Contains keratan sulfate. Cornea and other tissues.

It is found in the secreted. The protein localises to the extracellular space. The protein resides in the extracellular matrix. In Homo sapiens (Human), this protein is Lumican (LUM).